Reading from the N-terminus, the 177-residue chain is Interleukin-1 receptor antagonist protein (177 aa).

The signal sequence occupies residues 1–25 (MEVCRCHHGYLISLLLFLFHSETAC). C91 and C141 form a disulfide bridge. N-linked (GlcNAc...) asparagine glycosylation is found at N109 and N114.

It belongs to the IL-1 family.

The protein localises to the secreted. Its function is as follows. Anti-inflammatory antagonist of interleukin-1 family of proinflammatory cytokines such as interleukin-1beta/IL1B and interleukin-1alpha/IL1A. Protects from immune dysregulation and uncontrolled systemic inflammation triggered by IL1 for a range of innate stimulatory agents such as pathogens. In Tursiops truncatus (Atlantic bottle-nosed dolphin), this protein is Interleukin-1 receptor antagonist protein (IL1RN).